Here is a 94-residue protein sequence, read N- to C-terminus: Co-chaperonin GroES (94 aa).

This sequence belongs to the GroES chaperonin family. In terms of assembly, heptamer of 7 subunits arranged in a ring. Interacts with the chaperonin GroEL.

It is found in the cytoplasm. Together with the chaperonin GroEL, plays an essential role in assisting protein folding. The GroEL-GroES system forms a nano-cage that allows encapsulation of the non-native substrate proteins and provides a physical environment optimized to promote and accelerate protein folding. GroES binds to the apical surface of the GroEL ring, thereby capping the opening of the GroEL channel. The protein is Co-chaperonin GroES of Streptococcus agalactiae serotype III (strain NEM316).